The primary structure comprises 292 residues: tRNA (guanine-N(7)-)-methyltransferase (292 aa).

The tract at residues 1 to 52 is disordered; it reads MGKIEATSKEEKLRVQKEAEARRRAYRDLKKEARQMQKEVKFDTDDNSELPK. S-adenosyl-L-methionine contacts are provided by residues Gly-106, 129–130, 166–167, and Cys-186; these read EI and NA. The active site involves Asp-189. 264-266 is a binding site for S-adenosyl-L-methionine; that stretch reads TEE.

The protein belongs to the class I-like SAM-binding methyltransferase superfamily. TrmB family. Forms a complex with TRM82.

Its subcellular location is the nucleus. The enzyme catalyses guanosine(46) in tRNA + S-adenosyl-L-methionine = N(7)-methylguanosine(46) in tRNA + S-adenosyl-L-homocysteine. The protein operates within tRNA modification; N(7)-methylguanine-tRNA biosynthesis. Functionally, catalyzes the formation of N(7)-methylguanine at position 46 (m7G46) in tRNA. This chain is tRNA (guanine-N(7)-)-methyltransferase, found in Debaryomyces hansenii (strain ATCC 36239 / CBS 767 / BCRC 21394 / JCM 1990 / NBRC 0083 / IGC 2968) (Yeast).